The primary structure comprises 280 residues: Small ribosomal subunit protein uS3 (280 aa).

Residues 38–106 (IRRLLSTGLE…QVQLNILEVR (69 aa)) form the KH type-2 domain. Positions 215–280 (AAAAPAGAER…PAAEPQSTES (66 aa)) are disordered. Low complexity predominate over residues 238–280 (SGASGTTATGTEAGRAAASADESTAAGQPAEAAPAAEPQSTES).

It belongs to the universal ribosomal protein uS3 family. Part of the 30S ribosomal subunit. Forms a tight complex with proteins S10 and S14.

Functionally, binds the lower part of the 30S subunit head. Binds mRNA in the 70S ribosome, positioning it for translation. The protein is Small ribosomal subunit protein uS3 of Mycobacterium avium (strain 104).